The sequence spans 334 residues: 6-phosphogluconolactonase (334 aa).

This sequence belongs to the cycloisomerase 2 family.

The enzyme catalyses 6-phospho-D-glucono-1,5-lactone + H2O = 6-phospho-D-gluconate + H(+). It participates in carbohydrate degradation; pentose phosphate pathway; D-ribulose 5-phosphate from D-glucose 6-phosphate (oxidative stage): step 2/3. Its function is as follows. Catalyzes the hydrolysis of 6-phosphogluconolactone to 6-phosphogluconate. The sequence is that of 6-phosphogluconolactonase from Yersinia pseudotuberculosis serotype O:1b (strain IP 31758).